We begin with the raw amino-acid sequence, 95 residues long: Small ribosomal subunit protein bS20 (95 aa).

It belongs to the bacterial ribosomal protein bS20 family.

Binds directly to 16S ribosomal RNA. This is Small ribosomal subunit protein bS20 from Ehrlichia chaffeensis (strain ATCC CRL-10679 / Arkansas).